The following is a 452-amino-acid chain: Eukaryotic translation initiation factor 3 subunit E (452 aa).

The PCI domain maps to 257-426; that stretch reads TDLFFSPAYI…GTVIMNHPPQ (170 aa).

The protein belongs to the eIF-3 subunit E family. In terms of assembly, component of the eukaryotic translation initiation factor 3 (eIF-3) complex.

The protein localises to the cytoplasm. Its function is as follows. Component of the eukaryotic translation initiation factor 3 (eIF-3) complex, which is involved in protein synthesis of a specialized repertoire of mRNAs and, together with other initiation factors, stimulates binding of mRNA and methionyl-tRNAi to the 40S ribosome. The eIF-3 complex specifically targets and initiates translation of a subset of mRNAs involved in cell proliferation. This chain is Eukaryotic translation initiation factor 3 subunit E (int6), found in Aspergillus niger (strain ATCC MYA-4892 / CBS 513.88 / FGSC A1513).